The chain runs to 81 residues: Large ribosomal subunit protein uL23 (81 aa).

The protein belongs to the universal ribosomal protein uL23 family. Part of the 50S ribosomal subunit. Contacts protein L29.

Binds to 23S rRNA. One of the proteins that surrounds the polypeptide exit tunnel on the outside of the ribosome. The chain is Large ribosomal subunit protein uL23 from Saccharolobus solfataricus (strain ATCC 35092 / DSM 1617 / JCM 11322 / P2) (Sulfolobus solfataricus).